The primary structure comprises 470 residues: Low molecular weight neuronal intermediate filament (470 aa).

The head stretch occupies residues 1–91; that stretch reads MTSRELYTSS…KIVRTNEKEQ (91 aa). The IF rod domain occupies 88–399; that stretch reads EKEQLQGLND…KLLEGEETRL (312 aa). The interval 91–123 is coil 1A; that stretch reads QLQGLNDRFVTYIEKVHHLEQQNKLLESEVTLL. Positions 121 to 136 are linker 1; that stretch reads TLLRQKHSEPSRLSHI. Positions 137–232 are coil 1B; sequence YEQEIRELRS…KVHEEEIAEL (96 aa). Residues 233–251 form a linker 12 region; that stretch reads QASVQEAQISVEMDVVSKP. The tract at residues 252–270 is coil 2A; it reads DLTAALKEIRMQYEVLSAR. A linker 2 region spans residues 271 to 279; sequence NQQSSEEWY. The interval 280–395 is coil 2B; the sequence is QAKIANVSLE…AAYRKLLEGE (116 aa). Residues 396–470 form a tail region; it reads ETRLTSVGGG…EKISQKAAAN (75 aa). Positions 414-431 are enriched in low complexity; sequence FSSGSYSGGRSSTTSTIS. The tract at residues 414–470 is disordered; that stretch reads FSSGSYSGGRSSTTSTISIRKEEKKESPEGGKGGSSGQPKTSKPGDQEKISQKAAAN. Residues 432–442 show a composition bias toward basic and acidic residues; sequence IRKEEKKESPE.

It belongs to the intermediate filament family. In terms of tissue distribution, nervous system; in axons in the PNS and in small perikarya in the dorsal root ganglion.

The sequence is that of Low molecular weight neuronal intermediate filament from Xenopus laevis (African clawed frog).